The chain runs to 255 residues: Small ribosomal subunit protein eS1 (255 aa).

Alanine 2 is modified (N-acetylalanine; partial).

Belongs to the eukaryotic ribosomal protein eS1 family. As to quaternary structure, component of the small ribosomal subunit. Mature ribosomes consist of a small (40S) and a large (60S) subunit. The 40S subunit contains about 33 different proteins and 1 molecule of RNA (18S). The 60S subunit contains about 49 different proteins and 3 molecules of RNA (25S, 5.8S and 5S).

The protein resides in the cytoplasm. The protein is Small ribosomal subunit protein eS1 of Arthroderma otae (strain ATCC MYA-4605 / CBS 113480) (Microsporum canis).